Here is a 236-residue protein sequence, read N- to C-terminus: tRNA (guanine-N(1)-)-methyltransferase (236 aa).

S-adenosyl-L-methionine contacts are provided by residues Gly-116 and 136-141; that span reads LGDFVL.

Belongs to the RNA methyltransferase TrmD family. As to quaternary structure, homodimer.

Its subcellular location is the cytoplasm. The catalysed reaction is guanosine(37) in tRNA + S-adenosyl-L-methionine = N(1)-methylguanosine(37) in tRNA + S-adenosyl-L-homocysteine + H(+). Its function is as follows. Specifically methylates guanosine-37 in various tRNAs. The chain is tRNA (guanine-N(1)-)-methyltransferase from Thiobacillus denitrificans (strain ATCC 25259 / T1).